The following is a 362-amino-acid chain: Homeobox-leucine zipper protein HOX11 (362 aa).

A compositionally biased stretch (basic and acidic residues) spans 27-45; that stretch reads REEAAEAGRRDHEVRRELE. Residues 27-179 are disordered; it reads REEAAEAGRR…DDGGSARKKL (153 aa). Positions 64–75 are enriched in low complexity; it reads LTLLPMVPGLGL. Polar residues predominate over residues 126–135; the sequence is LSSSPNNSAG. The segment covering 145–160 has biased composition (gly residues); that stretch reads HGLGGNDAAPGGGGGD. The segment at residues 174 to 233 is a DNA-binding region (homeobox); the sequence is SARKKLRLSKEQSAFLEESFKEHSTLNPKQKLALAKQLNLRPRQVEVWFQNRRARTKLKQ. The segment at 232-276 is leucine-zipper; sequence KQTEVDCEYLKRCCETLTEENRRLQKELAELRALKTVHPFYMHLP. The tract at residues 301–330 is disordered; the sequence is AATSSTAAPPAAPSSGGIAATSSSAAAAAA.

The protein belongs to the HD-ZIP homeobox family. Class II subfamily. Expressed in stems, leaf sheaths and blades and panicles.

The protein resides in the nucleus. Its function is as follows. Probable transcription factor. This chain is Homeobox-leucine zipper protein HOX11 (HOX11), found in Oryza sativa subsp. japonica (Rice).